The primary structure comprises 657 residues: Zinc finger CCCH domain-containing protein 50 (657 aa).

ANK repeat units follow at residues 68 to 97 (EARTPLMVAATYGSAGVVSLLVGLGGCVDV) and 104 to 136 (DGATALHCAASGGSRNAVAVVKLLLAAGADPAT). A compositionally biased stretch (low complexity) spans 176-206 (SVASGSSSPPLSSSPDEGNRSPSSRSSSLSP). Positions 176–222 (SVASGSSSPPLSSSPDEGNRSPSSRSSSLSPITVDRGKKEYPVDPTL) are disordered. C3H1-type zinc fingers lie at residues 274–302 (PYTAVPCPNFRRPGGCPSGDSCEFSHGVF) and 311–333 (YRTRLCKEGAACARRICFFAHDE). Residues 507 to 566 (YSPRALDPSSLAHSPFGGMSPRSPRTMEPTSPLSARVGAPATQRPSVGSPRNSSAWGTVG) are disordered. The segment covering 549–562 (QRPSVGSPRNSSAW) has biased composition (polar residues).

This Oryza sativa subsp. japonica (Rice) protein is Zinc finger CCCH domain-containing protein 50.